Reading from the N-terminus, the 459-residue chain is Ribulose bisphosphate carboxylase large chain (459 aa).

Substrate is bound by residues Asn98 and Thr148. Lys150 acts as the Proton acceptor in catalysis. Position 152 (Lys152) interacts with substrate. 3 residues coordinate Mg(2+): Lys176, Asp178, and Glu179. Lys176 bears the N6-carboxylysine mark. The Proton acceptor role is filled by His268. Residues Arg269, His301, and Ser353 each contribute to the substrate site.

It belongs to the RuBisCO large chain family. Type I subfamily. Heterohexadecamer of 8 large chains and 8 small chains. The cofactor is Mg(2+).

The protein resides in the plastid. The protein localises to the chloroplast. The catalysed reaction is 2 (2R)-3-phosphoglycerate + 2 H(+) = D-ribulose 1,5-bisphosphate + CO2 + H2O. It carries out the reaction D-ribulose 1,5-bisphosphate + O2 = 2-phosphoglycolate + (2R)-3-phosphoglycerate + 2 H(+). In terms of biological role, ruBisCO catalyzes two reactions: the carboxylation of D-ribulose 1,5-bisphosphate, the primary event in carbon dioxide fixation, as well as the oxidative fragmentation of the pentose substrate in the photorespiration process. Both reactions occur simultaneously and in competition at the same active site. This chain is Ribulose bisphosphate carboxylase large chain (rbcL), found in Calyptrosphaera sphaeroidea.